Consider the following 794-residue polypeptide: MAGWIQAQQLQGDALRQMQVLYGQHFPIEVRHYLAQWIESQPWDAIDLDNPQDRAQATQLLEGLVQELQKKAEHQVGEDGFLLKIKLGHYATQLQKTYDRCPLELVRCIRHILYNEQRLVREANNCSSPAGILVDAMSQKHLQINQTFEELRLVTQDTENELKKLQQTQEYFIIQYQESLRIQAQFAQLAQLSPQERLSRETALQQKQVSLEAWLQREAQTLQQYRVELAEKHQKTLQLLRKQQTIILDDELIQWKRRQQLAGNGGPPEGSLDVLQSWCEKLAEIIWQNRQQIRRAEHLCQQLPIPGPVEEMLAEVNATITDIISALVTSTFIIEKQPPQVLKTQTKFAATVRLLVGGKLNVHMNPPQVKATIISEQQAKSLLKNENTRNECSGEILNNCCVMEYHQATGTLSAHFRNMSLKRIKRADRRGAESVTEEKFTVLFESQFSVGSNELVFQVKTLSLPVVVIVHGSQDHNATATVLWDNAFAEPGRVPFAVPDKVLWPQLCEALNMKFKAEVQSNRGLTKENLVFLAQKLFNNSSSHLEDYSGLSVSWSQFNRENLPGWNYTFWQWFDGVMEVLKKHHKPHWNDGAILGFVNKQQAHDLLINKPDGTFLLRFSDSEIGGITIAWKFDSPERNLWNLKPFTTRDFSIRSLADRLGDLSYLIYVFPDRPKDEVFSKYYTPVLAKAVDGYVKPQIKQVVPEFVNASADAGGSSATYMDQAPSPAVCPQAPYNMYPQNPDHVLDQDGEFDLDETMDVARHVEELLRRPMDSLDSRLSPPAGLFTSARGSLS.

The residue at position 90 (Tyr-90) is a Phosphotyrosine. Phosphoserine is present on residues Ser-128 and Ser-193. The region spanning Trp-589 to Val-686 is the SH2 domain. A Phosphotyrosine modification is found at Tyr-682. Phosphotyrosine; by JAK2 is present on Tyr-694. The tract at residues Asp-773 to Ser-794 is disordered. Phosphoserine is present on Ser-780.

The protein belongs to the transcription factor STAT family. As to quaternary structure, forms a homodimer or a heterodimer with a related family member. Binds NR3C1. Interacts with NCOA1 and SOCS7. Interacts with ERBB4. Interacts with EBF4. Interacts with CD69. Post-translationally, tyrosine phosphorylated in response to KITLG/SCF, IL2, IL3, IL7, IL15, CSF2/GMCSF, GH1, PRL, EPO and THPO. Activated KIT promotes phosphorylation on tyrosine residues and subsequent translocation to the nucleus. Tyrosine phosphorylated in response to constitutively activated FGFR1, FGFR2, FGFR3 and FGFR4. Tyrosine phosphorylation is required for DNA-binding activity and dimerization. Serine phosphorylation is also required for maximal transcriptional activity. Tyrosine phosphorylated in response to signaling via activated FLT3; wild-type FLT3 results in much weaker phosphorylation than constitutively activated mutant FLT3. Alternatively, can be phosphorylated by JAK2 at Tyr-694. In terms of processing, ISGylated.

Its subcellular location is the cytoplasm. It localises to the nucleus. In terms of biological role, carries out a dual function: signal transduction and activation of transcription. Mediates cellular responses to the cytokine KITLG/SCF and other growth factors. Mediates cellular responses to ERBB4. May mediate cellular responses to activated FGFR1, FGFR2, FGFR3 and FGFR4. Binds to the GAS element and activates PRL-induced transcription. Regulates the expression of milk proteins during lactation. The protein is Signal transducer and activator of transcription 5A (STAT5A) of Homo sapiens (Human).